The sequence spans 354 residues: Peptide chain release factor 1 (354 aa).

The residue at position 231 (Gln231) is an N5-methylglutamine. Residues 284–304 (EALAKDRKEQVGSGDRSERIR) are compositionally biased toward basic and acidic residues. Residues 284–308 (EALAKDRKEQVGSGDRSERIRTYNF) form a disordered region.

The protein belongs to the prokaryotic/mitochondrial release factor family. In terms of processing, methylated by PrmC. Methylation increases the termination efficiency of RF1.

The protein resides in the cytoplasm. Functionally, peptide chain release factor 1 directs the termination of translation in response to the peptide chain termination codons UAG and UAA. This Nitratiruptor sp. (strain SB155-2) protein is Peptide chain release factor 1.